We begin with the raw amino-acid sequence, 302 residues long: Phosphatidylglycerol--prolipoprotein diacylglyceryl transferase (302 aa).

Helical transmembrane passes span 26 to 46 (WYAL…VMLV), 67 to 87 (LVLW…VLFY), and 108 to 128 (IWEG…AIVL). Arg-156 is a binding site for a 1,2-diacyl-sn-glycero-3-phospho-(1'-sn-glycerol). A run of 2 helical transmembrane segments spans residues 231–251 (GALV…LEGV) and 263–283 (LGLT…VWLL).

It belongs to the Lgt family.

The protein resides in the cell inner membrane. It catalyses the reaction L-cysteinyl-[prolipoprotein] + a 1,2-diacyl-sn-glycero-3-phospho-(1'-sn-glycerol) = an S-1,2-diacyl-sn-glyceryl-L-cysteinyl-[prolipoprotein] + sn-glycerol 1-phosphate + H(+). The protein operates within protein modification; lipoprotein biosynthesis (diacylglyceryl transfer). Catalyzes the transfer of the diacylglyceryl group from phosphatidylglycerol to the sulfhydryl group of the N-terminal cysteine of a prolipoprotein, the first step in the formation of mature lipoproteins. The polypeptide is Phosphatidylglycerol--prolipoprotein diacylglyceryl transferase (Caulobacter sp. (strain K31)).